Consider the following 600-residue polypeptide: NADH-quinone oxidoreductase subunit C/D (600 aa).

An NADH dehydrogenase I subunit C region spans residues 1-190 (MIDLMPKKNT…EPFFLNEQKE (190 aa)). Positions 214–600 (EFMFLNLGPN…IDFVMSDVDR (387 aa)) are NADH dehydrogenase I subunit D.

It in the N-terminal section; belongs to the complex I 30 kDa subunit family. The protein in the C-terminal section; belongs to the complex I 49 kDa subunit family. NDH-1 is composed of 13 different subunits. Subunits NuoB, CD, E, F, and G constitute the peripheral sector of the complex.

The protein resides in the cell membrane. The catalysed reaction is a quinone + NADH + 5 H(+)(in) = a quinol + NAD(+) + 4 H(+)(out). NDH-1 shuttles electrons from NADH, via FMN and iron-sulfur (Fe-S) centers, to quinones in the respiratory chain. The immediate electron acceptor for the enzyme in this species is believed to be ubiquinone. Couples the redox reaction to proton translocation (for every two electrons transferred, four hydrogen ions are translocated across the cytoplasmic membrane), and thus conserves the redox energy in a proton gradient. In Buchnera aphidicola subsp. Acyrthosiphon pisum (strain Tuc7), this protein is NADH-quinone oxidoreductase subunit C/D.